We begin with the raw amino-acid sequence, 628 residues long: Forkhead box protein O (628 aa).

T50 bears the Phosphothreonine; by PKB/AKT1 mark. Position 81 is a phosphoserine (S81). The segment at residues 101-207 is a DNA-binding region (fork-head); sequence WGNLSYADLI…ETSRYEKRRG (107 aa). Disordered stretches follow at residues 188-210 and 223-270; these read KSVR…GRAK and GLND…SSCG. S196 carries the phosphoserine; by PKB/AKT1 modification. 2 stretches are compositionally biased toward polar residues: residues 227 to 236 and 261 to 270; these read ATPSPSSSVS and RASSNASSCG. Position 264 is a phosphoserine; by PKB/AKT1 (S264). A phosphoserine mark is found at S267, S268, and S273. Disordered regions lie at residues 327–373 and 398–451; these read SAAS…SLQP and NSVT…QQQQ. The segment covering 334 to 343 has biased composition (pro residues); that stretch reads TQPPPPPYPA. Positions 344-359 are enriched in low complexity; sequence PQQQQQQQPQQQQAYT. A compositionally biased stretch (polar residues) spans 411-423; it reads SEPSSDSLNTYSN. Residues 438-451 show a composition bias toward low complexity; sequence QQQRQQQQQQQQQQ.

In terms of assembly, interacts with melt.

Its subcellular location is the cytoplasm. The protein resides in the nucleus. Functionally, transcription factor involved in the regulation of the insulin signaling pathway. Consistently activates both the downstream target Thor\d4EBP and the feedback control target InR. Involved in negative regulation of the cell cycle, modulating cell growth and proliferation. In response to cellular stresses, such as nutrient deprivation or increased levels of reactive oxygen species, foxo is activated and inhibits growth through the action of target genes such as Thor. Foxo activated in the adult fat body can regulate lifespan in adults; an insulin peptide itself may function as one secondary messenger of insulin-regulated aging. Also regulates Lip4, homolog of human acid lipases, thereby acting as a key modulator of lipid metabolism by insulin signaling and integrates insulin responses to glucose and lipid homeostasis. The polypeptide is Forkhead box protein O (Drosophila willistoni (Fruit fly)).